The sequence spans 350 residues: Protein-glutamate methylesterase/protein-glutamine glutaminase (350 aa).

The region spanning 5–122 is the Response regulatory domain; the sequence is KVLCVDDSAL…RDGLIEYSEV (118 aa). Asp56 is subject to 4-aspartylphosphate. In terms of domain architecture, CheB-type methylesterase spans 152 to 346; sequence PFASSEKLVI…ERILTRLGDR (195 aa). Active-site residues include Ser165, His191, and Asp288.

It belongs to the CheB family. Phosphorylated by CheA. Phosphorylation of the N-terminal regulatory domain activates the methylesterase activity.

Its subcellular location is the cytoplasm. The enzyme catalyses [protein]-L-glutamate 5-O-methyl ester + H2O = L-glutamyl-[protein] + methanol + H(+). It carries out the reaction L-glutaminyl-[protein] + H2O = L-glutamyl-[protein] + NH4(+). In terms of biological role, involved in chemotaxis. Part of a chemotaxis signal transduction system that modulates chemotaxis in response to various stimuli. Catalyzes the demethylation of specific methylglutamate residues introduced into the chemoreceptors (methyl-accepting chemotaxis proteins or MCP) by CheR. Also mediates the irreversible deamidation of specific glutamine residues to glutamic acid. This is Protein-glutamate methylesterase/protein-glutamine glutaminase from Bordetella bronchiseptica (strain ATCC BAA-588 / NCTC 13252 / RB50) (Alcaligenes bronchisepticus).